Reading from the N-terminus, the 284-residue chain is L-ribulose-5-phosphate 3-epimerase UlaE (284 aa).

This sequence belongs to the L-ribulose-5-phosphate 3-epimerase family.

It catalyses the reaction L-ribulose 5-phosphate = L-xylulose 5-phosphate. It functions in the pathway cofactor degradation; L-ascorbate degradation; D-xylulose 5-phosphate from L-ascorbate: step 3/4. Its function is as follows. Catalyzes the isomerization of L-xylulose-5-phosphate to L-ribulose-5-phosphate. Is involved in the anaerobic L-ascorbate utilization. The chain is L-ribulose-5-phosphate 3-epimerase UlaE from Escherichia coli O17:K52:H18 (strain UMN026 / ExPEC).